The sequence spans 511 residues: Sphingosine-1-phosphate transporter MFSD2B (511 aa).

9 helical membrane passes run M108–V128, V136–P156, I236–V256, T280–V300, N323–L343, L357–V377, V379–V399, A415–I435, and L462–Y482.

The protein belongs to the major facilitator superfamily.

The protein localises to the cell membrane. It catalyses the reaction sphing-4-enine 1-phosphate(in) = sphing-4-enine 1-phosphate(out). The enzyme catalyses sphinganine 1-phosphate(in) = sphinganine 1-phosphate(out). The catalysed reaction is sphinga-4E,14Z-dienine-1-phosphate(in) = sphinga-4E,14Z-dienine-1-phosphate(out). Its function is as follows. Lipid transporter that specifically mediates export of sphingosine-1-phosphate in red blood cells and platelets. Sphingosine-1-phosphate is a signaling sphingolipid and its export from red blood cells into in the plasma is required for red blood cell morphology. Sphingosine-1-phosphate export from platelets is required for platelet aggregation and thrombus formation. In addition to export, also able to mediate S1P import. The chain is Sphingosine-1-phosphate transporter MFSD2B from Xenopus tropicalis (Western clawed frog).